A 695-amino-acid polypeptide reads, in one-letter code: Threonine--tRNA ligase (695 aa).

Residues 1–76 (MPRIPSPPQA…TTTDVVEPVT (76 aa)) form the TGS domain. A catalytic region spans residues 279-585 (DHRKLGVELD…LLEHHAGAFP (307 aa)). Residues Cys-384, His-435, and His-562 each coordinate Zn(2+).

Belongs to the class-II aminoacyl-tRNA synthetase family. As to quaternary structure, homodimer. The cofactor is Zn(2+).

The protein resides in the cytoplasm. It catalyses the reaction tRNA(Thr) + L-threonine + ATP = L-threonyl-tRNA(Thr) + AMP + diphosphate + H(+). In terms of biological role, catalyzes the attachment of threonine to tRNA(Thr) in a two-step reaction: L-threonine is first activated by ATP to form Thr-AMP and then transferred to the acceptor end of tRNA(Thr). Also edits incorrectly charged L-seryl-tRNA(Thr). The sequence is that of Threonine--tRNA ligase from Leifsonia xyli subsp. xyli (strain CTCB07).